Consider the following 293-residue polypeptide: ATP synthase gamma chain (293 aa).

The protein belongs to the ATPase gamma chain family. In terms of assembly, F-type ATPases have 2 components, CF(1) - the catalytic core - and CF(0) - the membrane proton channel. CF(1) has five subunits: alpha(3), beta(3), gamma(1), delta(1), epsilon(1). CF(0) has three main subunits: a, b and c.

Its subcellular location is the cell inner membrane. Produces ATP from ADP in the presence of a proton gradient across the membrane. The gamma chain is believed to be important in regulating ATPase activity and the flow of protons through the CF(0) complex. The sequence is that of ATP synthase gamma chain from Psychrobacter cryohalolentis (strain ATCC BAA-1226 / DSM 17306 / VKM B-2378 / K5).